The chain runs to 165 residues: Large ribosomal subunit protein eL15 (165 aa).

The interval T126 to G147 is disordered. A compositionally biased stretch (basic residues) spans R130 to H143.

It belongs to the eukaryotic ribosomal protein eL15 family. In terms of assembly, component of the large ribosomal subunit.

The protein localises to the cytoplasm. In terms of biological role, component of the large ribosomal subunit. The ribosome is a large ribonucleoprotein complex responsible for the synthesis of proteins in the cell. The polypeptide is Large ribosomal subunit protein eL15 (RPL15) (Gallus gallus (Chicken)).